The chain runs to 83 residues: Small ribosomal subunit protein eS21 (83 aa).

This sequence belongs to the eukaryotic ribosomal protein eS21 family. Component of the 40S small ribosomal subunit. Interacts with sta.

The protein resides in the cytoplasm. It is found in the cytosol. Its subcellular location is the rough endoplasmic reticulum. Its function is as follows. May be an associated component of the ribosome rather than a core structural subunit. May act as a translation initiation factor. Has a role in regulation of cell proliferation in the hematopoietic organs and the imaginal disks of larva. This is Small ribosomal subunit protein eS21 (RpS21) from Drosophila grimshawi (Hawaiian fruit fly).